The sequence spans 260 residues: Thymidylate synthase (260 aa).

A dUMP-binding site is contributed by R21. Position 51 (H51) interacts with (6R)-5,10-methylene-5,6,7,8-tetrahydrofolate. Residue 122–123 (RR) participates in dUMP binding. The active-site Nucleophile is C142. Residues 162–165 (RSAD), N173, and 203–205 (HLY) each bind dUMP. D165 is a binding site for (6R)-5,10-methylene-5,6,7,8-tetrahydrofolate. A259 contacts (6R)-5,10-methylene-5,6,7,8-tetrahydrofolate.

Belongs to the thymidylate synthase family. Bacterial-type ThyA subfamily. As to quaternary structure, homodimer.

It localises to the cytoplasm. The catalysed reaction is dUMP + (6R)-5,10-methylene-5,6,7,8-tetrahydrofolate = 7,8-dihydrofolate + dTMP. It functions in the pathway pyrimidine metabolism; dTTP biosynthesis. In terms of biological role, catalyzes the reductive methylation of 2'-deoxyuridine-5'-monophosphate (dUMP) to 2'-deoxythymidine-5'-monophosphate (dTMP) while utilizing 5,10-methylenetetrahydrofolate (mTHF) as the methyl donor and reductant in the reaction, yielding dihydrofolate (DHF) as a by-product. This enzymatic reaction provides an intracellular de novo source of dTMP, an essential precursor for DNA biosynthesis. The polypeptide is Thymidylate synthase (Methylococcus capsulatus (strain ATCC 33009 / NCIMB 11132 / Bath)).